The following is a 354-amino-acid chain: uncharacterized protein (354 aa).

9 consecutive transmembrane segments (helical) span residues 9–29 (MGKIELHHVFVMLSCIYLIFS), 31–51 (ISINSAVVFLFSSIFFYISFT), 76–96 (NFGIFLMIVGLIAVTSDLIWV), 109–129 (FLNVYFTTLSHLFLVGWAIVV), 144–164 (IIFSILIMLLGYRTNVLVLLI), 185–205 (GILVFVILLGLSILRLYALGV), 278–298 (YGTLAIIPYFGILGIFLGFFY), 306–326 (GIYLGIYGILFAYTLIGIESG), and 327–347 (ILDIDVILYYFFGLILCIYAI).

The protein localises to the cell membrane. This is an uncharacterized protein from Methanocaldococcus jannaschii (strain ATCC 43067 / DSM 2661 / JAL-1 / JCM 10045 / NBRC 100440) (Methanococcus jannaschii).